A 575-amino-acid chain; its full sequence is MAETTPSRPNDTPENSPGGGDDNQSQSAGQSKNPASVKDRKCQYCHQAFTSSSLGRHLDQYLFKKKPDGVHDVEEIRRIRSGITRRQARTSSGKRDTPERAMGKGPSEHFAGGEYGAKPREGAIRMMFNTPTWHATGVINDIPNPGQTPEGSRFATSQSRTGVIHLPDYASRGASAKDPDTMRALELALREVLDNIKAATSRMRPRLSPFDFDIQSETFPSLCLRLLPPPPSLFSTNPFPSPSSFPLKPPGVEHLDIVRQAIRAKIDQWQSDQLSTQSANNSPGRPPLGLDANMISRSAQQHEDMSLRHLELAFKHWASLPPETRLEAWHLEITRAFAREVEKRKTLDEQLARVQQEANQLRAQVEKLGSCQWPREFALFPPDTLPLPPAVARELDAKESQISPGSPRWDYDSVVAKWKRVVMHDKSMGRVGVGYGNPPLDDRSSADTKARATEEPPASAALASTSTSAPPSAHPPPRALQPAPGPALAASPDQSSSHTGGASAPSSQNTSPYLRSPQAGPQAKRPRLMNGADGGHTSAANPSATAPNTWNPHSHQSLPGSNLASASGPPPSSGA.

2 stretches are compositionally biased toward polar residues: residues 1 to 15 (MAET…TPEN) and 22 to 34 (DNQS…SKNP). 2 disordered regions span residues 1 to 40 (MAET…VKDR) and 79 to 114 (IRSG…AGGE). The UBZ4-type; degenerate zinc-finger motif lies at 39 to 66 (DRKCQYCHQAFTSSSLGRHLDQYLFKKK). Over residues 93-102 (GKRDTPERAM) the composition is skewed to basic and acidic residues. The stretch at 337 to 371 (FAREVEKRKTLDEQLARVQQEANQLRAQVEKLGSC) forms a coiled coil. Residues 429–575 (GRVGVGYGNP…ASGPPPSSGA (147 aa)) are disordered. Positions 440–454 (LDDRSSADTKARATE) are enriched in basic and acidic residues. Residues 455 to 471 (EPPASAALASTSTSAPP) show a composition bias toward low complexity. Residues 472–485 (SAHPPPRALQPAPG) are compositionally biased toward pro residues. 2 stretches are compositionally biased toward polar residues: residues 493-513 (DQSS…TSPY) and 538-558 (SAAN…HQSL).

As to quaternary structure, interacts with atrR.

It is found in the nucleus. Functionally, transcription factor required for normal voriconazole resistance. Contributes to the function of atrR and regulates the expression of the atrR target gene abcG1. In Aspergillus fumigatus (strain ATCC MYA-4609 / CBS 101355 / FGSC A1100 / Af293) (Neosartorya fumigata), this protein is Transcription factor ncaA.